Here is a 177-residue protein sequence, read N- to C-terminus: Large ribosomal subunit protein uL6 (177 aa).

Belongs to the universal ribosomal protein uL6 family. As to quaternary structure, part of the 50S ribosomal subunit.

Functionally, this protein binds to the 23S rRNA, and is important in its secondary structure. It is located near the subunit interface in the base of the L7/L12 stalk, and near the tRNA binding site of the peptidyltransferase center. The protein is Large ribosomal subunit protein uL6 of Afipia carboxidovorans (strain ATCC 49405 / DSM 1227 / KCTC 32145 / OM5) (Oligotropha carboxidovorans).